A 352-amino-acid polypeptide reads, in one-letter code: Quinolinate synthase (352 aa).

His48 and Ser69 together coordinate iminosuccinate. A [4Fe-4S] cluster-binding site is contributed by Cys114. Iminosuccinate-binding positions include 140–142 (YAN) and Ser157. Residue Cys201 coordinates [4Fe-4S] cluster. Iminosuccinate is bound by residues 227–229 (HPE) and Thr244. [4Fe-4S] cluster is bound at residue Cys298.

It belongs to the quinolinate synthase family. Type 1 subfamily. [4Fe-4S] cluster serves as cofactor.

Its subcellular location is the cytoplasm. The enzyme catalyses iminosuccinate + dihydroxyacetone phosphate = quinolinate + phosphate + 2 H2O + H(+). The protein operates within cofactor biosynthesis; NAD(+) biosynthesis; quinolinate from iminoaspartate: step 1/1. Functionally, catalyzes the condensation of iminoaspartate with dihydroxyacetone phosphate to form quinolinate. The protein is Quinolinate synthase of Pseudomonas putida (strain ATCC 700007 / DSM 6899 / JCM 31910 / BCRC 17059 / LMG 24140 / F1).